The following is a 276-amino-acid chain: Undecaprenyl-diphosphatase (276 aa).

The next 5 helical transmembrane spans lie at 84–104 (YRLGWYVIIGTIPICILGLFF), 115–135 (LWVVVTALVVFSGVIALAEYV), 188–208 (FGFLLAIPAVFASGLFSLPDA), 222–242 (QLLVATLIAFVLGLTAVAWLL), and 250–270 (MYWFVGYRVLVGTGMLVLLAT).

This sequence belongs to the UppP family.

The protein localises to the cell membrane. It catalyses the reaction di-trans,octa-cis-undecaprenyl diphosphate + H2O = di-trans,octa-cis-undecaprenyl phosphate + phosphate + H(+). In terms of biological role, catalyzes the dephosphorylation of undecaprenyl diphosphate (UPP). Confers resistance to bacitracin. The chain is Undecaprenyl-diphosphatase from Mycobacterium tuberculosis (strain ATCC 25177 / H37Ra).